An 865-amino-acid polypeptide reads, in one-letter code: Fatty acyl-CoA synthetase and RNA processing-associated kinase 1 (865 aa).

In terms of domain architecture, Protein kinase spans 41–313 (YILGSTLGEG…LKQIKKHEWL (273 aa)). Residues 47 to 55 (LGEGEFGKV) and Lys-80 each bind ATP. Asp-175 (proton acceptor) is an active-site residue. A disordered region spans residues 341–398 (KPRRRYGSRPQSSCSTSSLGSRSDKRDSLVIDSTLITFPAPPQESQNHIITRPASIAS). Residues 352–361 (SSCSTSSLGS) show a composition bias toward low complexity. Ser-441 bears the Phosphoserine mark. Disordered regions lie at residues 480–554 (ISGS…YTTP), 673–733 (TEES…LNEA), and 754–782 (SLYS…YQTN). A compositionally biased stretch (polar residues) spans 494–538 (STTMQTSKIQPNNMASSQNHQYNKNKTQNSLQSAKNFYRTSSSSH). 2 stretches are compositionally biased toward basic and acidic residues: residues 690–708 (EGQE…EKGS) and 724–733 (NHLERSLNEA).

Belongs to the protein kinase superfamily. Ser/Thr protein kinase family. Interacts with FAA3, POL5 and TPA1.

The protein localises to the cytoplasm. It carries out the reaction L-seryl-[protein] + ATP = O-phospho-L-seryl-[protein] + ADP + H(+). It catalyses the reaction L-threonyl-[protein] + ATP = O-phospho-L-threonyl-[protein] + ADP + H(+). Its function is as follows. Putative serine/threonine-protein kinase that may be involved in rRNA transcription and ribosome biogenesis. The protein is Fatty acyl-CoA synthetase and RNA processing-associated kinase 1 (FRK1) of Saccharomyces cerevisiae (strain ATCC 204508 / S288c) (Baker's yeast).